Consider the following 329-residue polypeptide: Anthranilate phosphoribosyltransferase (329 aa).

5-phospho-alpha-D-ribose 1-diphosphate-binding positions include Gly78, 81 to 82 (GD), Thr86, 88 to 91 (NLST), 106 to 114 (KHGNRSASG), and Ser118. Gly78 is a binding site for anthranilate. Ser90 lines the Mg(2+) pocket. Asn109 contacts anthranilate. Anthranilate is bound at residue Arg164. Mg(2+) is bound by residues Asp221 and Glu222.

The protein belongs to the anthranilate phosphoribosyltransferase family. As to quaternary structure, homodimer. Mg(2+) is required as a cofactor.

The catalysed reaction is N-(5-phospho-beta-D-ribosyl)anthranilate + diphosphate = 5-phospho-alpha-D-ribose 1-diphosphate + anthranilate. It functions in the pathway amino-acid biosynthesis; L-tryptophan biosynthesis; L-tryptophan from chorismate: step 2/5. In terms of biological role, catalyzes the transfer of the phosphoribosyl group of 5-phosphorylribose-1-pyrophosphate (PRPP) to anthranilate to yield N-(5'-phosphoribosyl)-anthranilate (PRA). In Pyrobaculum islandicum (strain DSM 4184 / JCM 9189 / GEO3), this protein is Anthranilate phosphoribosyltransferase.